Here is a 362-residue protein sequence, read N- to C-terminus: Class I histocompatibility antigen, Gogo-B*0103 alpha chain (362 aa).

The signal sequence occupies residues 1-24 (MRVTAPRTLLLLLSAALALTETWA). Residues 25–114 (GSHSMRYFDT…ALRYYNQSEA (90 aa)) form an alpha-1 region. Over 25-308 (GSHSMRYFDT…EPSSQSTIPI (284 aa)) the chain is Extracellular. N-linked (GlcNAc...) asparagine glycosylation occurs at Asn-110. The alpha-2 stretch occupies residues 115–206 (GSHTIQWMYG…ENGRETLQRA (92 aa)). Intrachain disulfides connect Cys-125–Cys-188 and Cys-227–Cys-283. The segment at 207–298 (DTPKTHVTHH…GLPKPLTLRW (92 aa)) is alpha-3. In terms of domain architecture, Ig-like C1-type spans 209-295 (PKTHVTHHPI…QHEGLPKPLT (87 aa)). The segment at 299 to 308 (EPSSQSTIPI) is connecting peptide. A helical transmembrane segment spans residues 309–332 (VGIVAGLAVLAVVVIGAVVTAVIC). Over 333–362 (RRKSSGGKGGSYSQAASSDSAQGSDVSLTA) the chain is Cytoplasmic. The tract at residues 335 to 362 (KSSGGKGGSYSQAASSDSAQGSDVSLTA) is disordered. Residues 343–362 (SYSQAASSDSAQGSDVSLTA) show a composition bias toward low complexity.

The protein belongs to the MHC class I family. In terms of assembly, heterodimer of an alpha chain and a beta chain (beta-2-microglobulin).

Its subcellular location is the membrane. Involved in the presentation of foreign antigens to the immune system. The chain is Class I histocompatibility antigen, Gogo-B*0103 alpha chain from Gorilla gorilla gorilla (Western lowland gorilla).